A 620-amino-acid polypeptide reads, in one-letter code: MSTTNTAAASQDACYISLLGLAEYFRTSQPPNVKKCIQCLQALFTFTPPSKVEARTHLQMGQILMAYTKNIDMARQHLEKAWNIAEPLMNFDDVKFDTASVLAQLHLQTDQSSHTAKAMLRRAVELSQHNVYWHCKLLLQLSQIHASDREYSLASELLAVGAESAEEAGATYLKVLFLLSRAMILMIERKTNDVLALLNTAGQIIDNNIPNPHQKEYLKVFFLVLQVCYYLALGQVKTVKPSLKQLQMSIQTIMAPNWPTDEAIFGANQLEMFVWLPKEQLYVLVYLVTVSHSMMAGYMDKAQKYTEKALTQIEKLKMQEDKPILSVFKVILLEHIVMCRMVMGNRELAIREIAAARDVCLAVPHRSLLKRHSAQLHCLIGLYSMSTSFFEHAERQFLVCVNETTERDLKLFANLNLAIIYLRTKRDADLKQILDAVSTENTHTYSSQALMGGFYYVQGLHAFHKNSFHEAKRFLRETLKMANAEDLNRLTSCSLVLLSHVFLSIGNSKESMNMVTPAMQLASKIPDIHVQLWGSAILKDLHRMSKDAQHEKDAYANHVKYSENLIADQRKCVQSAHHELVNWFQGDPPVTSGAAALILSEIPTTSALQPTTGQQFGQFY.

2 TPR repeats span residues 452–485 and 492–525; these read GGFY…ANAE and SCSL…ASKI.

This sequence belongs to the SCC4/mau-2 family. Interacts with Nipped-B to form the cohesin loading complex.

The protein resides in the nucleus. Its subcellular location is the nucleoplasm. Its function is as follows. Required for association of the cohesin complex with chromatin during interphase. Plays a role in sister chromatid cohesion and normal progression through prometaphase. The protein is MAU2 chromatid cohesion factor homolog of Drosophila persimilis (Fruit fly).